The sequence spans 225 residues: Leucyl/phenylalanyl-tRNA--protein transferase (225 aa).

It belongs to the L/F-transferase family.

The protein localises to the cytoplasm. The enzyme catalyses N-terminal L-lysyl-[protein] + L-leucyl-tRNA(Leu) = N-terminal L-leucyl-L-lysyl-[protein] + tRNA(Leu) + H(+). It catalyses the reaction N-terminal L-arginyl-[protein] + L-leucyl-tRNA(Leu) = N-terminal L-leucyl-L-arginyl-[protein] + tRNA(Leu) + H(+). It carries out the reaction L-phenylalanyl-tRNA(Phe) + an N-terminal L-alpha-aminoacyl-[protein] = an N-terminal L-phenylalanyl-L-alpha-aminoacyl-[protein] + tRNA(Phe). Functions in the N-end rule pathway of protein degradation where it conjugates Leu, Phe and, less efficiently, Met from aminoacyl-tRNAs to the N-termini of proteins containing an N-terminal arginine or lysine. The protein is Leucyl/phenylalanyl-tRNA--protein transferase of Nitrobacter hamburgensis (strain DSM 10229 / NCIMB 13809 / X14).